Reading from the N-terminus, the 341-residue chain is tRNA N6-adenosine threonylcarbamoyltransferase (341 aa).

Fe cation is bound by residues histidine 111 and histidine 115. Substrate contacts are provided by residues 134 to 138 (LVSGG), aspartate 167, glycine 180, and asparagine 276. Residue aspartate 304 participates in Fe cation binding.

Belongs to the KAE1 / TsaD family. Fe(2+) is required as a cofactor.

It localises to the cytoplasm. The enzyme catalyses L-threonylcarbamoyladenylate + adenosine(37) in tRNA = N(6)-L-threonylcarbamoyladenosine(37) in tRNA + AMP + H(+). Required for the formation of a threonylcarbamoyl group on adenosine at position 37 (t(6)A37) in tRNAs that read codons beginning with adenine. Is involved in the transfer of the threonylcarbamoyl moiety of threonylcarbamoyl-AMP (TC-AMP) to the N6 group of A37, together with TsaE and TsaB. TsaD likely plays a direct catalytic role in this reaction. The polypeptide is tRNA N6-adenosine threonylcarbamoyltransferase (Pseudomonas fluorescens (strain SBW25)).